Here is a 161-residue protein sequence, read N- to C-terminus: Cyclic pyranopterin monophosphate synthase (161 aa).

Substrate contacts are provided by residues 73 to 75 (LCH) and 110 to 111 (ME). Asp125 is a catalytic residue.

The protein belongs to the MoaC family. In terms of assembly, homohexamer; trimer of dimers.

It carries out the reaction (8S)-3',8-cyclo-7,8-dihydroguanosine 5'-triphosphate = cyclic pyranopterin phosphate + diphosphate. It participates in cofactor biosynthesis; molybdopterin biosynthesis. Catalyzes the conversion of (8S)-3',8-cyclo-7,8-dihydroguanosine 5'-triphosphate to cyclic pyranopterin monophosphate (cPMP). The chain is Cyclic pyranopterin monophosphate synthase from Pseudomonas syringae pv. tomato (strain ATCC BAA-871 / DC3000).